Consider the following 392-residue polypeptide: 23S rRNA (uracil(747)-C(5))-methyltransferase RlmC (392 aa).

[4Fe-4S] cluster is bound by residues Cys-4, Cys-12, Cys-15, and Cys-93. The S-adenosyl-L-methionine site is built by Gln-218, Phe-247, Glu-275, and Asn-321. Residue Cys-348 is the Nucleophile of the active site.

It belongs to the class I-like SAM-binding methyltransferase superfamily. RNA M5U methyltransferase family. RlmC subfamily.

The enzyme catalyses uridine(747) in 23S rRNA + S-adenosyl-L-methionine = 5-methyluridine(747) in 23S rRNA + S-adenosyl-L-homocysteine + H(+). Its function is as follows. Catalyzes the formation of 5-methyl-uridine at position 747 (m5U747) in 23S rRNA. The protein is 23S rRNA (uracil(747)-C(5))-methyltransferase RlmC of Haemophilus influenzae (strain PittGG).